Consider the following 229-residue polypeptide: Urease accessory protein UreF (229 aa).

It belongs to the UreF family. In terms of assembly, ureD, UreF and UreG form a complex that acts as a GTP-hydrolysis-dependent molecular chaperone, activating the urease apoprotein by helping to assemble the nickel containing metallocenter of UreC. The UreE protein probably delivers the nickel.

It localises to the cytoplasm. Functionally, required for maturation of urease via the functional incorporation of the urease nickel metallocenter. This Staphylococcus aureus (strain MRSA252) protein is Urease accessory protein UreF.